A 262-amino-acid chain; its full sequence is Octanoyltransferase (262 aa).

The BPL/LPL catalytic domain occupies 60–248 (GTADELVWLV…AFEMVFGPTR (189 aa)). Substrate contacts are provided by residues 99 to 106 (RGGEYTYH), 179 to 181 (AIG), and 192 to 194 (GLS). The active-site Acyl-thioester intermediate is the cysteine 210.

This sequence belongs to the LipB family.

Its subcellular location is the cytoplasm. The enzyme catalyses octanoyl-[ACP] + L-lysyl-[protein] = N(6)-octanoyl-L-lysyl-[protein] + holo-[ACP] + H(+). The protein operates within protein modification; protein lipoylation via endogenous pathway; protein N(6)-(lipoyl)lysine from octanoyl-[acyl-carrier-protein]: step 1/2. In terms of biological role, catalyzes the transfer of endogenously produced octanoic acid from octanoyl-acyl-carrier-protein onto the lipoyl domains of lipoate-dependent enzymes. Lipoyl-ACP can also act as a substrate although octanoyl-ACP is likely to be the physiological substrate. This chain is Octanoyltransferase, found in Sinorhizobium medicae (strain WSM419) (Ensifer medicae).